Here is a 64-residue protein sequence, read N- to C-terminus: Conotoxin VnMLCL-033 (64 aa).

The N-terminal stretch at 1–19 (MLCLPVFIILLLLASPAAP) is a signal peptide. Positions 20 to 43 (NPLQTRIQSNLIRAGPEDANIKTD) are excised as a propeptide. Ile63 is subject to Isoleucine amide.

The protein belongs to the conotoxin T superfamily. As to expression, expressed by the venom duct.

Its subcellular location is the secreted. The polypeptide is Conotoxin VnMLCL-033 (Conus ventricosus (Mediterranean cone)).